Here is a 362-residue protein sequence, read N- to C-terminus: 3-dehydroquinate synthase (362 aa).

Residues 74–79, 108–112, 132–133, K145, and K154 each bind NAD(+); these read DGEEHK, GVTGD, and TT. Zn(2+) is bound by residues E187, H250, and H267.

The protein belongs to the sugar phosphate cyclases superfamily. Dehydroquinate synthase family. The cofactor is Co(2+). Zn(2+) is required as a cofactor. NAD(+) serves as cofactor.

The protein localises to the cytoplasm. It carries out the reaction 7-phospho-2-dehydro-3-deoxy-D-arabino-heptonate = 3-dehydroquinate + phosphate. It functions in the pathway metabolic intermediate biosynthesis; chorismate biosynthesis; chorismate from D-erythrose 4-phosphate and phosphoenolpyruvate: step 2/7. Functionally, catalyzes the conversion of 3-deoxy-D-arabino-heptulosonate 7-phosphate (DAHP) to dehydroquinate (DHQ). This chain is 3-dehydroquinate synthase, found in Syntrophotalea carbinolica (strain DSM 2380 / NBRC 103641 / GraBd1) (Pelobacter carbinolicus).